We begin with the raw amino-acid sequence, 523 residues long: Cytokinin dehydrogenase 3 (523 aa).

Positions 1–31 are cleaved as a signal peptide; it reads MASYNLRSQVRLIAITIVIIITLSTPITTNT. Positions 66–243 constitute an FAD-binding PCMH-type domain; that stretch reads TKIFPSAVLI…TRARIKLEVA (178 aa). Residues alanine 100, glycine 102, and glycine 104 each contribute to the FAD site. At histidine 105 the chain carries Pros-8alpha-FAD histidine. Residues serine 106 and glutamine 110 each coordinate FAD. N-linked (GlcNAc...) asparagine glycosylation is present at asparagine 153. Residues aspartate 167, threonine 172, serine 178, isoleucine 182, and isoleucine 233 each contribute to the FAD site. N-linked (GlcNAc...) asparagine glycosylation is present at asparagine 408. Positions 476, 511, and 514 each coordinate FAD.

Belongs to the oxygen-dependent FAD-linked oxidoreductase family. The cofactor is FAD. Very weak expression in the young shoot tissues around two weeks after germination. Present in the center of the floral meristem and the boundary between long stamen primordia and gynoecial primordia.

It is found in the endoplasmic reticulum. Its subcellular location is the vacuole. The catalysed reaction is N(6)-dimethylallyladenine + A + H2O = 3-methyl-2-butenal + adenine + AH2. Functionally, catalyzes the oxidation of cytokinins, a family of N(6)-substituted adenine derivatives that are plant hormones, where the substituent is an isopentenyl group. Catalyzes in vitro the oxidation of various types of cytokinin nucleotides that are known as direct products of cytokinin biosynthesis. In association with CKX5 regulates the activity of the reproductive meristems, flower organ size and ovule formation. The chain is Cytokinin dehydrogenase 3 (CKX3) from Arabidopsis thaliana (Mouse-ear cress).